A 90-amino-acid chain; its full sequence is Probable Fe(2+)-trafficking protein (90 aa).

The protein belongs to the Fe(2+)-trafficking protein family.

Functionally, could be a mediator in iron transactions between iron acquisition and iron-requiring processes, such as synthesis and/or repair of Fe-S clusters in biosynthetic enzymes. In Pseudomonas fluorescens (strain Pf0-1), this protein is Probable Fe(2+)-trafficking protein.